Consider the following 514-residue polypeptide: 1,25-dihydroxyvitamin D(3) 24-hydroxylase, mitochondrial (514 aa).

The N-terminal 35 residues, 1 to 35 (MSCPIDKRRTLIAFLRRLRDLGQPPRSVTSKASAS), are a transit peptide targeting the mitochondrion. Residue cysteine 462 participates in heme binding.

The protein belongs to the cytochrome P450 family. Heme is required as a cofactor.

The protein localises to the mitochondrion. It catalyses the reaction calcitriol + 2 reduced [adrenodoxin] + O2 + 2 H(+) = calcitetrol + 2 oxidized [adrenodoxin] + H2O. The catalysed reaction is calcitetrol + 2 reduced [adrenodoxin] + O2 + 2 H(+) = (1S)-1,25-dihydroxy-24-oxocalciol + 2 oxidized [adrenodoxin] + 2 H2O. The enzyme catalyses (1S)-1,25-dihydroxy-24-oxocalciol + 2 reduced [adrenodoxin] + O2 + 2 H(+) = (1S)-1,23,25-trihydroxy-24-oxocalciol + 2 oxidized [adrenodoxin] + H2O. It carries out the reaction (1S)-1,23-dihydroxy-24,25,26,27-tetranorcalciol + 2 reduced [adrenodoxin] + O2 + 2 H(+) = (1S)-1-hydroxy-23-oxo-24,25,26,27-tetranorcalciol + 2 oxidized [adrenodoxin] + 2 H2O. It catalyses the reaction (1S)-1-hydroxy-23-oxo-24,25,26,27-tetranorcalciol + 2 reduced [adrenodoxin] + O2 + H(+) = calcitroate + 2 oxidized [adrenodoxin] + H2O. The catalysed reaction is calcidiol + 2 reduced [adrenodoxin] + O2 + 2 H(+) = secalciferol + 2 oxidized [adrenodoxin] + H2O. The enzyme catalyses secalciferol + 2 reduced [adrenodoxin] + O2 + 2 H(+) = 25-hydroxy-24-oxocalciol + 2 oxidized [adrenodoxin] + 2 H2O. It carries out the reaction 25-hydroxy-24-oxocalciol + 2 reduced [adrenodoxin] + O2 + 2 H(+) = 23S,25-dihydroxy-24-oxocholecalciferol + 2 oxidized [adrenodoxin] + H2O. It catalyses the reaction 20S,23-dihydroxycholecalciferol + 2 reduced [adrenodoxin] + O2 + 2 H(+) = 20S,23,25-trihydroxycholecalciferol + 2 oxidized [adrenodoxin] + H2O. The catalysed reaction is 20S,23-dihydroxycholecalciferol + 2 reduced [adrenodoxin] + O2 + 2 H(+) = 20S,23,24-trihydroxycholecalciferol + 2 oxidized [adrenodoxin] + H2O. The enzyme catalyses 20S-hydroxycholecalciferol + 2 reduced [adrenodoxin] + O2 + 2 H(+) = 20S,25-dihydroxycholecalciferol + 2 oxidized [adrenodoxin] + H2O. It carries out the reaction 20S-hydroxycholecalciferol + 2 reduced [adrenodoxin] + O2 + 2 H(+) = 20S,24S-dihydroxycholecalciferol + 2 oxidized [adrenodoxin] + H2O. It catalyses the reaction 20S-hydroxycholecalciferol + 2 reduced [adrenodoxin] + O2 + 2 H(+) = 20S,24R-dihydroxycholecalciferol + 2 oxidized [adrenodoxin] + H2O. Functionally, a cytochrome P450 monooxygenase with a key role in vitamin D catabolism and calcium homeostasis. Via C24-oxidation pathway, catalyzes the inactivation of both the vitamin D precursor calcidiol (25-hydroxyvitamin D(3)) and the active hormone calcitriol (1-alpha,25-dihydroxyvitamin D(3)). With initial hydroxylation at C-24 (via C24-oxidation pathway), performs a sequential 6-step oxidation of calcitriol leading to the formation of the biliary metabolite calcitroic acid. Hydroxylates at C-24 or C-25 other vitamin D active metabolites, such as CYP11A1-derived secosteroids 20S-hydroxycholecalciferol and 20S,23-dihydroxycholecalciferol. Mechanistically, uses molecular oxygen inserting one oxygen atom into a substrate, and reducing the second into a water molecule, with two electrons provided by NADPH via FDXR/adrenodoxin reductase and FDX1/adrenodoxin. This chain is 1,25-dihydroxyvitamin D(3) 24-hydroxylase, mitochondrial (Cyp24a1), found in Rattus norvegicus (Rat).